Here is a 218-residue protein sequence, read N- to C-terminus: Phosphoglycolate phosphatase (218 aa).

Catalysis depends on D7, which acts as the Nucleophile. Mg(2+) contacts are provided by D7, D9, and D167.

It belongs to the HAD-like hydrolase superfamily. CbbY/CbbZ/Gph/YieH family. The cofactor is Mg(2+).

It catalyses the reaction 2-phosphoglycolate + H2O = glycolate + phosphate. The protein operates within organic acid metabolism; glycolate biosynthesis; glycolate from 2-phosphoglycolate: step 1/1. Specifically catalyzes the dephosphorylation of 2-phosphoglycolate. Is involved in the dissimilation of the intracellular 2-phosphoglycolate formed during the DNA repair of 3'-phosphoglycolate ends, a major class of DNA lesions induced by oxidative stress. This chain is Phosphoglycolate phosphatase, found in Cereibacter sphaeroides (strain ATCC 17025 / ATH 2.4.3) (Rhodobacter sphaeroides).